Reading from the N-terminus, the 600-residue chain is Sodium- and chloride-dependent betaine transporter (600 aa).

Residues 1 to 31 (MGTSEHVPLPTDEAKAKELEQSQHSEEPDRG) are disordered. Residues 1–38 (MGTSEHVPLPTDEAKAKELEQSQHSEEPDRGQWTGKFD) lie on the Cytoplasmic side of the membrane. Basic and acidic residues predominate over residues 12 to 30 (DEAKAKELEQSQHSEEPDR). The next 3 membrane-spanning stretches (helical) occupy residues 39-59 (FLMS…FPYL), 68-88 (FLVV…LMEV), and 116-136 (VVIA…AMFY). The Extracellular segment spans residues 137 to 207 (MISSIAWVFP…DTGDISEFGG (71 aa)). Asn165 is a glycosylation site (N-linked (GlcNAc...) asparagine). Helical transmembrane passes span 208–228 (IQWE…FALW) and 237–257 (FVYF…IRGL). An N-linked (GlcNAc...) asparagine glycan is attached at Asn273. 7 helical membrane passes run 286 to 306 (AGTQ…ALGS), 321 to 341 (MCFI…SILG), 378 to 398 (VFAV…QVCM), 420 to 440 (SLGI…THSG), 454 to 474 (GYAL…GFGA), 499 to 519 (FCAP…YHPV), and 536 to 556 (WFLS…YLFF). The Cytoplasmic portion of the chain corresponds to 557–600 (TNKHLTLKERVRKGLNLDGSFESPAKKNLVNNAEELKFIESSSQ).

This sequence belongs to the sodium:neurotransmitter symporter (SNF) family. Highly expressed in the head, the excretory canal, tail hypodermal cells, epidermis and vulval epithelial cells. Expressed in the excretory canal-associated neuron and in some non-amphidial sensory neurons in the head (at protein level).

The protein localises to the cell membrane. Functionally, betaine transporter dependent on Na(+) and Cl(-) ions that functions primarily in the epidermis to clear betaine from the extracellular space. Elicits current in response to betaine but not in response to GABA, L-carnitine, sarcosine, glycine or dimethylglycine. The chain is Sodium- and chloride-dependent betaine transporter from Caenorhabditis elegans.